Here is a 131-residue protein sequence, read N- to C-terminus: Small ribosomal subunit protein uS8 (131 aa).

This sequence belongs to the universal ribosomal protein uS8 family. In terms of assembly, part of the 30S ribosomal subunit. Contacts proteins S5 and S12.

In terms of biological role, one of the primary rRNA binding proteins, it binds directly to 16S rRNA central domain where it helps coordinate assembly of the platform of the 30S subunit. The polypeptide is Small ribosomal subunit protein uS8 (Porphyromonas gingivalis (strain ATCC 33277 / DSM 20709 / CIP 103683 / JCM 12257 / NCTC 11834 / 2561)).